A 295-amino-acid chain; its full sequence is 33 kDa chaperonin (295 aa).

Intrachain disulfides connect cysteine 238–cysteine 240 and cysteine 271–cysteine 274.

This sequence belongs to the HSP33 family. In terms of processing, under oxidizing conditions two disulfide bonds are formed involving the reactive cysteines. Under reducing conditions zinc is bound to the reactive cysteines and the protein is inactive.

It localises to the cytoplasm. Functionally, redox regulated molecular chaperone. Protects both thermally unfolding and oxidatively damaged proteins from irreversible aggregation. Plays an important role in the bacterial defense system toward oxidative stress. This is 33 kDa chaperonin from Clostridium botulinum (strain Eklund 17B / Type B).